Consider the following 68-residue polypeptide: UPF0337 protein RB10934 (68 aa).

Belongs to the UPF0337 (CsbD) family.

This Rhodopirellula baltica (strain DSM 10527 / NCIMB 13988 / SH1) protein is UPF0337 protein RB10934.